We begin with the raw amino-acid sequence, 301 residues long: XIAP-associated factor 1 (301 aa).

Residues 22-99 form a TRAF-type zinc finger; it reads LHEAYCLRFL…KLDMQLSKLE (78 aa). The tract at residues 189-257 is disordered; sequence ILPSSLPSQA…KPRTSSPRGD (69 aa). The span at 193–205 shows a compositional bias: polar residues; that stretch reads SLPSQAAENQTST.

In terms of assembly, interacts with BIRC4; the interaction is not detected in. Interacts with BIRC1, BIRC2, BIRC3, BIRC7 and BIRC8. Part of an complex consisting of BIRC4, XAF1 and BIRC5; the complex formation requires IFN-beta stimulation. Interacts with RNF114, the interaction increases XAF1 stability and proapoptotic effects, and may regulate IFN signaling. As to expression, widely expressed. Expression is frequently down-regulated in cancer cell lines. Isoform 5 is widely expressed. Expressed in placenta (at protein level).

It localises to the cytoplasm. It is found in the nucleus. The protein localises to the mitochondrion. Seems to function as a negative regulator of members of the IAP (inhibitor of apoptosis protein) family. Inhibits anti-caspase activity of BIRC4. Induces cleavage and inactivation of BIRC4 independent of caspase activation. Mediates TNF-alpha-induced apoptosis and is involved in apoptosis in trophoblast cells. May inhibit BIRC4 indirectly by activating the mitochondrial apoptosis pathway. After translocation to mitochondria, promotes translocation of BAX to mitochondria and cytochrome c release from mitochondria. Seems to promote the redistribution of BIRC4 from the cytoplasm to the nucleus, probably independent of BIRC4 inactivation which seems to occur in the cytoplasm. The BIRC4-XAF1 complex mediates down-regulation of BIRC5/survivin; the process requires the E3 ligase activity of BIRC4. Seems to be involved in cellular sensitivity to the proapoptotic actions of TRAIL. May be a tumor suppressor by mediating apoptosis resistance of cancer cells. This chain is XIAP-associated factor 1 (XAF1), found in Homo sapiens (Human).